A 217-amino-acid chain; its full sequence is Transmembrane protein 247 (217 aa).

The span at 1-10 (MATEDREMME) shows a compositional bias: basic and acidic residues. The tract at residues 1–87 (MATEDREMME…GPATTKGQAG (87 aa)) is disordered. A coiled-coil region spans residues 109–154 (RERDAEMELEKVRMEFELKRLKYLHEENERQRQHEEVMEQLQQQAT). 2 helical membrane passes run 165–185 (LLLPQNQFAMFLYCFIFIHII) and 192–212 (IFFLFSKHYLFCIAAILLCLI).

Its subcellular location is the membrane. The polypeptide is Transmembrane protein 247 (Bos taurus (Bovine)).